Here is a 158-residue protein sequence, read N- to C-terminus: Transcriptional repressor NrdR (158 aa).

Residues 3-34 (CPYCGYPDSKVIDSRPTDDNTSIRRRRECLKC) fold into a zinc finger. One can recognise an ATP-cone domain in the interval 49–139 (ILVIKKDNRR…VYRQFKDINT (91 aa)).

Belongs to the NrdR family. It depends on Zn(2+) as a cofactor.

Functionally, negatively regulates transcription of bacterial ribonucleotide reductase nrd genes and operons by binding to NrdR-boxes. This Thermoanaerobacter pseudethanolicus (strain ATCC 33223 / 39E) (Clostridium thermohydrosulfuricum) protein is Transcriptional repressor NrdR.